The primary structure comprises 477 residues: MSPQTETKAGVGFKAGVKDYKLTYYTPEYETKDTDILAAFRVSPQPGVPPEEAGAAVAAESSTGTWTTVWTDGLTSLDRYKGRCYHIEPVAGEDSQWICYVAYPLDLFEEGSVTNMFTSIVGNVFGFKALRALRLEDLRIPPTYSKTFQGPPHGIQVERDKLNKYGRPLLGCTIKPKLGLSAKNYGRACYECLRGGLDFTKDDENVNSQPFMRWRDRFVFCAEAIYKSQAETGEIKGHYLNATAGTCEEMIKRAVFARELGVPIVMHDYLTGGFTANTTLAHYCRDNGLLLHIHRAMHAVIDRQKNHGMHFRVLAKALRMSGGDHIHSGTVVGKLEGEREMTLGFVDLLRDDFIEKDRARGIFFTQDWVSMPGVIPVASGGIHVWHMPALTEIFGDDSVLQFGGGTLGHPWGNAPGAAANRVALEACVQARNEGRDLAREGNEIIRAACKWSPELAAACEVWKAIKFEFEPVDTIDK.

A propeptide spanning residues 1–2 (MS) is cleaved from the precursor. An N-acetylproline modification is found at Pro-3. Substrate is bound by residues Asn-123 and Thr-173. Lys-175 serves as the catalytic Proton acceptor. Residue Lys-177 participates in substrate binding. Lys-201, Asp-203, and Glu-204 together coordinate Mg(2+). Lys-201 carries the N6-carboxylysine modification. The active-site Proton acceptor is the His-294. Substrate-binding residues include Arg-295, His-327, and Ser-379.

The protein belongs to the RuBisCO large chain family. Type I subfamily. As to quaternary structure, heterohexadecamer of 8 large chains and 8 small chains; disulfide-linked. The disulfide link is formed within the large subunit homodimers. Requires Mg(2+) as cofactor. The disulfide bond which can form between Cys-247 in the large chain dimeric partners within the hexadecamer appears to be associated with oxidative stress and protein turnover.

The protein resides in the plastid. It localises to the chloroplast. It carries out the reaction 2 (2R)-3-phosphoglycerate + 2 H(+) = D-ribulose 1,5-bisphosphate + CO2 + H2O. The enzyme catalyses D-ribulose 1,5-bisphosphate + O2 = 2-phosphoglycolate + (2R)-3-phosphoglycerate + 2 H(+). Its function is as follows. RuBisCO catalyzes two reactions: the carboxylation of D-ribulose 1,5-bisphosphate, the primary event in carbon dioxide fixation, as well as the oxidative fragmentation of the pentose substrate in the photorespiration process. Both reactions occur simultaneously and in competition at the same active site. This chain is Ribulose bisphosphate carboxylase large chain (rbcL), found in Triticum aestivum (Wheat).